We begin with the raw amino-acid sequence, 986 residues long: LRR receptor-like serine/threonine-protein kinase ER2 (986 aa).

A signal peptide spans 1–21 (MTTTTTTRLLLAAILLAVAAA). Residues 22–581 (DDDGQTLLEI…VQRSSVSRSA (560 aa)) lie on the Extracellular side of the membrane. N64 and N73 each carry an N-linked (GlcNAc...) asparagine glycan. LRR repeat units follow at residues 68 to 89 (AVAA…AIGN), 90 to 114 (LKSV…IGDC), 116 to 138 (SLKT…ISKL), 139 to 161 (KHLE…TLSQ), 162 to 186 (LPNL…IYWN), 188 to 210 (VLQY…MCQL), 211 to 233 (TGLW…TIGN), 234 to 259 (CTSF…GFLQ), 261 to 280 (ATLS…VIGL), 281 to 304 (MQAL…ILGN), 306 to 329 (TYTE…LGNM), 330 to 352 (STLH…ELGK), 354 to 377 (TGLF…ISSC), 379 to 401 (NLIS…LHKL), 402 to 425 (ESIT…LAKM), 427 to 449 (NLDT…IGSL), 450 to 472 (EHLL…EFGN), 473 to 498 (LRSI…GMLQ), 500 to 520 (LILL…LINC), and 521 to 545 (FSLN…NFSR). N-linked (GlcNAc...) asparagine glycosylation is found at N220 and N233. N-linked (GlcNAc...) asparagine glycans are attached at residues N269, N304, and N328. 3 N-linked (GlcNAc...) asparagine glycosylation sites follow: N373, N391, and N408. The N-linked (GlcNAc...) asparagine glycan is linked to N456. Residues N509, N527, and N542 are each glycosylated (N-linked (GlcNAc...) asparagine). Residues 582–602 (ILGIAVAGLVILLMILAAACW) traverse the membrane as a helical segment. Topologically, residues 603–986 (PHWAQVPKDV…FGEVISQNTE (384 aa)) are cytoplasmic. The Protein kinase domain occupies 653–934 (LSEKYIIGYG…YPDPPSKPAL (282 aa)). Residues 659–667 (IGYGASSTV) and K681 contribute to the ATP site. The active-site Proton acceptor is D779.

Belongs to the protein kinase superfamily. Ser/Thr protein kinase family.

It localises to the cell membrane. It carries out the reaction L-seryl-[protein] + ATP = O-phospho-L-seryl-[protein] + ADP + H(+). It catalyses the reaction L-threonyl-[protein] + ATP = O-phospho-L-threonyl-[protein] + ADP + H(+). Its function is as follows. Receptor kinase that may be involved in the regulation of cell proliferation and cell growth. This Oryza sativa subsp. japonica (Rice) protein is LRR receptor-like serine/threonine-protein kinase ER2.